The sequence spans 477 residues: Aspartyl/glutamyl-tRNA(Asn/Gln) amidotransferase subunit B (477 aa).

It belongs to the GatB/GatE family. GatB subfamily. As to quaternary structure, heterotrimer of A, B and C subunits.

It catalyses the reaction L-glutamyl-tRNA(Gln) + L-glutamine + ATP + H2O = L-glutaminyl-tRNA(Gln) + L-glutamate + ADP + phosphate + H(+). It carries out the reaction L-aspartyl-tRNA(Asn) + L-glutamine + ATP + H2O = L-asparaginyl-tRNA(Asn) + L-glutamate + ADP + phosphate + 2 H(+). In terms of biological role, allows the formation of correctly charged Asn-tRNA(Asn) or Gln-tRNA(Gln) through the transamidation of misacylated Asp-tRNA(Asn) or Glu-tRNA(Gln) in organisms which lack either or both of asparaginyl-tRNA or glutaminyl-tRNA synthetases. The reaction takes place in the presence of glutamine and ATP through an activated phospho-Asp-tRNA(Asn) or phospho-Glu-tRNA(Gln). The chain is Aspartyl/glutamyl-tRNA(Asn/Gln) amidotransferase subunit B from Methylobacillus flagellatus (strain ATCC 51484 / DSM 6875 / VKM B-1610 / KT).